The primary structure comprises 263 residues: Ribonuclease HII (263 aa).

Residues 71 to 262 form the RNase H type-2 domain; the sequence is QAIAGIDEVG…VKSMCCDSTN (192 aa). 3 residues coordinate a divalent metal cation: D77, E78, and D172.

Belongs to the RNase HII family. Requires Mn(2+) as cofactor. The cofactor is Mg(2+).

Its subcellular location is the cytoplasm. The catalysed reaction is Endonucleolytic cleavage to 5'-phosphomonoester.. Endonuclease that specifically degrades the RNA of RNA-DNA hybrids. The protein is Ribonuclease HII of Streptococcus pyogenes serotype M12 (strain MGAS2096).